Here is a 294-residue protein sequence, read N- to C-terminus: Maltose/maltodextrin import ATP-binding protein MalK (294 aa).

Residues 4-233 enclose the ABC transporter domain; sequence VQLRNVTKAW…PADRFVAGFI (230 aa). Position 36 to 43 (36 to 43) interacts with ATP; that stretch reads GPSGCGKS.

Belongs to the ABC transporter superfamily. Maltooligosaccharide importer (TC 3.A.1.1.1) family. As to quaternary structure, the complex is composed of two ATP-binding proteins (MalK), two transmembrane proteins (MalG and MalK) and a solute-binding protein (MalE).

The protein localises to the cell inner membrane. The catalysed reaction is D-maltose(out) + ATP + H2O = D-maltose(in) + ADP + phosphate + H(+). Its function is as follows. Part of the ABC transporter complex MalEFGK involved in maltose/maltodextrin import. Responsible for energy coupling to the transport system. The sequence is that of Maltose/maltodextrin import ATP-binding protein MalK from Klebsiella aerogenes (Enterobacter aerogenes).